The primary structure comprises 103 residues: Large ribosomal subunit protein bL21 (103 aa).

It belongs to the bacterial ribosomal protein bL21 family. As to quaternary structure, part of the 50S ribosomal subunit. Contacts protein L20.

In terms of biological role, this protein binds to 23S rRNA in the presence of protein L20. In Delftia acidovorans (strain DSM 14801 / SPH-1), this protein is Large ribosomal subunit protein bL21.